We begin with the raw amino-acid sequence, 284 residues long: MVLMIVSGRSGSGKSVALRALEDMGFYCVDNLPVVLLPELARSLADRNISAAVSIDVRNMPESPEIFEQAMKNLPAEFSPQLLFLDADRNTLIRRYSDTRRLHPLSSKNLSLESAIDEESDLLEPLRSRADLIVDTSEMSVHELAEMLRTRLLGKRERELTMVFESFGFKHGIPIDADYVFDVRFLPNPHWDPKLRPMTGLDKPVAAFLDRHTEVHNFIYQTRSYLELWLPMLETNNRSYLTVAIGCTGGKHRSVYIAEQLADYFRSRGKNVQSRHRTLEKRKS.

8–15 (GRSGSGKS) serves as a coordination point for ATP. 56 to 59 (DVRN) is a GTP binding site. Residues 266–284 (RSRGKNVQSRHRTLEKRKS) are RNA-binding.

This sequence belongs to the RapZ-like family. RapZ subfamily. In terms of assembly, homotrimer.

Its function is as follows. Modulates the synthesis of GlmS, by affecting the processing and stability of the regulatory small RNA GlmZ. When glucosamine-6-phosphate (GlcN6P) concentrations are high in the cell, RapZ binds GlmZ and targets it to cleavage by RNase E. Consequently, GlmZ is inactivated and unable to activate GlmS synthesis. Under low GlcN6P concentrations, RapZ is sequestered and inactivated by an other regulatory small RNA, GlmY, preventing GlmZ degradation and leading to synthesis of GlmS. This Klebsiella oxytoca protein is RNase adapter protein RapZ.